A 590-amino-acid polypeptide reads, in one-letter code: Dystrobrevin-1 (590 aa).

Positions 1–10 are enriched in gly residues; the sequence is MLWSNGGGGP. A disordered region spans residues 1-25; that stretch reads MLWSNGGGGPREPSSAPSPDHHRAM. A ZZ-type zinc finger spans residues 259 to 315; the sequence is YHPVVCDACQVRSFTGFRYKCQRCANYQLCQSCFWRGRTSQNHSNEHEMKEYSSYKS. 8 residues coordinate Zn(2+): Cys264, Cys267, Cys279, Cys282, Cys288, Cys291, His301, and His305. The stretch at 434–508 forms a coiled coil; sequence SMVGDERTLI…EHLMAQLNTG (75 aa). Residues 468–590 form an essential for interaction with ctn-1 region; that stretch reads DGLAGLRDRK…DENGVTINGF (123 aa). Residues 484–490 form an essential for interaction with dys-1 region; the sequence is MFEMQQR.

The protein belongs to the dystrophin family. Dystrobrevin subfamily. Component of the dystrophin glycoprotein complex (DGC). Interacts with dystrophin (dys-1) and syntrophin (stn-1) to form the DGC. Interacts (via C-terminus) with ctn-1 (via N-terminus); the interaction is required for localization of the dystrophin complex and ctn-1 near dense bodies in muscle cells. In terms of tissue distribution, from late embryogenesis to adulthood, expressed in neurons and muscles; particularly strong in the ventral nerve cord and in muscles of the body wall, head pharyngeal, and vulva; weaker in the intestinal muscle (at protein level).

Its subcellular location is the cytoplasm. In terms of biological role, plays a role in cholinergic transmission and as a functional partner of dystrophin (dys-1), necessary for muscle maintenance. Required for localization of ctn-1 near dense bodies in muscle cells. The polypeptide is Dystrobrevin-1 (Caenorhabditis elegans).